Consider the following 682-residue polypeptide: Methionine--tRNA ligase (682 aa).

The short motif at 15 to 25 (PYANGAIHLGH) is the 'HIGH' region element. Zn(2+)-binding residues include cysteine 146, cysteine 149, cysteine 159, and cysteine 162. Positions 331–335 (KMSKS) match the 'KMSKS' region motif. Lysine 334 is a binding site for ATP. Residues 580 to 682 (DFAKLDMRVA…NGVTAGMQVK (103 aa)) form the tRNA-binding domain.

Belongs to the class-I aminoacyl-tRNA synthetase family. MetG type 1 subfamily. In terms of assembly, homodimer. The cofactor is Zn(2+).

Its subcellular location is the cytoplasm. It catalyses the reaction tRNA(Met) + L-methionine + ATP = L-methionyl-tRNA(Met) + AMP + diphosphate. Is required not only for elongation of protein synthesis but also for the initiation of all mRNA translation through initiator tRNA(fMet) aminoacylation. This chain is Methionine--tRNA ligase, found in Haemophilus influenzae (strain PittGG).